Reading from the N-terminus, the 115-residue chain is Tyrosine-protein phosphatase 22 (115 aa).

One can recognise a Tyrosine-protein phosphatase domain in the interval 1–115; the sequence is WLMIVEQKCR…ETGGDAPMVV (115 aa). Position 83 (D83) interacts with substrate.

This sequence belongs to the protein-tyrosine phosphatase family.

It catalyses the reaction O-phospho-L-tyrosyl-[protein] + H2O = L-tyrosyl-[protein] + phosphate. In Styela plicata (Wrinkled sea squirt), this protein is Tyrosine-protein phosphatase 22 (STY-22).